The following is a 210-amino-acid chain: Large ribosomal subunit protein uL3 (210 aa).

Positions 119–143 (GYQGNIKKDGQSRGPMAHGSRYHRR) are disordered.

Belongs to the universal ribosomal protein uL3 family. As to quaternary structure, part of the 50S ribosomal subunit. Forms a cluster with proteins L14 and L19.

Its function is as follows. One of the primary rRNA binding proteins, it binds directly near the 3'-end of the 23S rRNA, where it nucleates assembly of the 50S subunit. This Lacticaseibacillus casei (strain BL23) (Lactobacillus casei) protein is Large ribosomal subunit protein uL3.